Consider the following 198-residue polypeptide: Ribonuclease HII (198 aa).

The RNase H type-2 domain occupies 3–198 (LSVGGIDEAG…SWETVGKLFK (196 aa)). A divalent metal cation contacts are provided by Asp-9, Glu-10, and Asp-104.

Belongs to the RNase HII family. Mn(2+) is required as a cofactor. The cofactor is Mg(2+).

It localises to the cytoplasm. It carries out the reaction Endonucleolytic cleavage to 5'-phosphomonoester.. Functionally, endonuclease that specifically degrades the RNA of RNA-DNA hybrids. This Pyrobaculum arsenaticum (strain DSM 13514 / JCM 11321 / PZ6) protein is Ribonuclease HII.